The primary structure comprises 139 residues: Aspartate 1-decarboxylase (139 aa).

Ser-26 acts as the Schiff-base intermediate with substrate; via pyruvic acid in catalysis. Position 26 is a pyruvic acid (Ser) (Ser-26). Substrate is bound at residue Thr-58. Residue Tyr-59 is the Proton donor of the active site. 72-74 (GGA) serves as a coordination point for substrate.

It belongs to the PanD family. In terms of assembly, heterooctamer of four alpha and four beta subunits. Pyruvate serves as cofactor. Is synthesized initially as an inactive proenzyme, which is activated by self-cleavage at a specific serine bond to produce a beta-subunit with a hydroxyl group at its C-terminus and an alpha-subunit with a pyruvoyl group at its N-terminus.

The protein resides in the cytoplasm. The enzyme catalyses L-aspartate + H(+) = beta-alanine + CO2. The protein operates within cofactor biosynthesis; (R)-pantothenate biosynthesis; beta-alanine from L-aspartate: step 1/1. In terms of biological role, catalyzes the pyruvoyl-dependent decarboxylation of aspartate to produce beta-alanine. This Microcystis aeruginosa (strain NIES-843 / IAM M-2473) protein is Aspartate 1-decarboxylase.